A 189-amino-acid polypeptide reads, in one-letter code: Large ribosomal subunit protein bL9 (189 aa).

It belongs to the bacterial ribosomal protein bL9 family.

Functionally, binds to the 23S rRNA. The chain is Large ribosomal subunit protein bL9 from Methylobacterium nodulans (strain LMG 21967 / CNCM I-2342 / ORS 2060).